The primary structure comprises 1234 residues: MQIPKPNNSTWTDDQWEAIVSEGQDILVAAAAGSGKTAVLVERLIRKMTRPEHPVDVDRLLVVTFTNASAAEMKHRITEALEKELAKNPGSLHMRRQLSLMNRANISTLHSFCLQVLRTFYYEIDLDPGFRLADQTEGELLGDEVLDELFEDEYKAGKPSFFELVDRYTSDRHDLDLQWLVKRIYDFSRSHPSPEQWMRAFLSLYDVDAQTKVEELPFYPYIKEDLSLVLRSCQELLERALSLSKEPGGPAPRAENFIDDLEQVNELIRHQDDFEKLYELLPNVNFKRLKTCKGDEYDPVLLEKATDARNQAKKQLEKLKDEYFMRSPAQHLKSLAEMKPIVETLVELVIQFGERFERAKQEKSIVDFSDLEHYCLRILAEQDAEGHLIETEAAKYYQQQFEEVLVDEYQDTNLVQETILKLVSKGEHSSEGNLFMVGDVKQSIYRFRLAEPMLFLNKYKHFQPDGKETGKRIDLNKNFRSRSDVLDSTNFLFKQLMGETVGEIEYDEQAELKLGASYPESKDTTTEMLLVHLDQQEAETGEEREELETVQFEARIIAKKIKELVEQPFQVYDAKQQMTRNLQYRDIVILLRSMPWAPQMMEELKKQGIPVYANLSSGYFEATEVSVILSLLKVIDNPYQDIPLAAVLRSPLVHLDENELALIRTSDKKGTYYDAVKAFMSVTHSDHPTCKKLERFFQLLRKWRDFSINHSVAELIWEVYRDTQYLDYVGGMPGGKQRQANLRALYDRAKQYEKAAFRGLFRFLRFIERMQERGDDLGAAKTFSETEDVVRMMTIHSSKGLEFPVVFTVGLGRNFNMMDLNQSYLLDKELGFGSKYIHPELRISYATLPLVAMKKKMRKELLSEELRVLYVALTRAKEKLFLVGSVKNQVKALSKWQNAATGEEWLLPDFERYQSKTYLDFIGPALIRHQAMSSVLEETGDVVLSHPSTFTISFTQASDLLKEDMSLEKKEQDEIVQALMDGLPVEGYGDADEKVAERLSWKYPYLAASQVGTKQSVSEIKRMKEIQDEYSVPSSIRKARATLYDRPAFMKKKTLTAAEQGTAMHTVMQHIPLPSEEPYDESRIGHLLDSLQQRDLLTDEQVQSINQEGIAAFFSTSIGQKLLKADWVKREVSFSMVLPVKEVYSHIDTEGEPVLIQGMIDCLFETDGKLYLLDYKTDRVQGRYTGGIDAAVPILKKRYETQIALYAKAVERLTNRTLEEKILYFFDGNVEISL.

The 474-residue stretch at 9-482 folds into the UvrD-like helicase ATP-binding domain; that stretch reads STWTDDQWEA…IDLNKNFRSR (474 aa). 30–37 contributes to the ATP binding site; that stretch reads AAAGSGKT. In terms of domain architecture, UvrD-like helicase C-terminal spans 509 to 800; it reads QAELKLGASY…RMMTIHSSKG (292 aa).

This sequence belongs to the helicase family. AddA subfamily. In terms of assembly, heterodimer of AddA and AddB/RexB. Mg(2+) serves as cofactor.

The enzyme catalyses Couples ATP hydrolysis with the unwinding of duplex DNA by translocating in the 3'-5' direction.. The catalysed reaction is ATP + H2O = ADP + phosphate + H(+). Functionally, the heterodimer acts as both an ATP-dependent DNA helicase and an ATP-dependent, dual-direction single-stranded exonuclease. Recognizes the chi site generating a DNA molecule suitable for the initiation of homologous recombination. The AddA nuclease domain is required for chi fragment generation; this subunit has the helicase and 3' -&gt; 5' nuclease activities. In Bacillus pumilus (strain SAFR-032), this protein is ATP-dependent helicase/nuclease subunit A.